The following is a 241-amino-acid chain: Prolactin-8A8 (241 aa).

A signal peptide spans 1–30; the sequence is MELQFRQPHFSDALLLLLLSNLLLWEKASS. Disulfide bonds link cysteine 34–cysteine 41, cysteine 101–cysteine 217, and cysteine 234–cysteine 241. The N-linked (GlcNAc...) asparagine glycan is linked to asparagine 213.

Belongs to the somatotropin/prolactin family. In terms of tissue distribution, expressed specifically in the placenta. Predominantly expressed in spongiotrophoblast cells.

The protein resides in the secreted. This Mus musculus (Mouse) protein is Prolactin-8A8 (Prl8a8).